The sequence spans 111 residues: MEAKAIAKYVRMSSMKVRVVLNLVRGKNVNEAFAILKYTPRDAAVVVNKLLKSAVANAENNLDLNRDTLYISEAYACEGPTLKRFQPHAQGRAFRINKRSSHITLIVKERE.

Belongs to the universal ribosomal protein uL22 family. As to quaternary structure, part of the 50S ribosomal subunit.

Its function is as follows. This protein binds specifically to 23S rRNA; its binding is stimulated by other ribosomal proteins, e.g. L4, L17, and L20. It is important during the early stages of 50S assembly. It makes multiple contacts with different domains of the 23S rRNA in the assembled 50S subunit and ribosome. The globular domain of the protein is located near the polypeptide exit tunnel on the outside of the subunit, while an extended beta-hairpin is found that lines the wall of the exit tunnel in the center of the 70S ribosome. This is Large ribosomal subunit protein uL22 from Clostridium kluyveri (strain NBRC 12016).